A 380-amino-acid polypeptide reads, in one-letter code: Histone deacetylase-like amidohydrolase (380 aa).

Residue H144 is the Proton donor/acceptor of the active site. 3 residues coordinate Zn(2+): D181, H183, and D269.

It belongs to the histone deacetylase family. Homotetramer; dimer of head-to-head dimers. The cofactor is Zn(2+).

Its activity is regulated as follows. Is inhibited by azobenzenes, stilbenes and arylazopyrazoles. Its function is as follows. Probable protein deacetylase that catalyzes deacetylation of acetylated lysine residues. In vitro, exhibits high activity against artificial HDAC (histone deacetylase) substrates containing acetylated and trifluoroacetylated lysine residues. Is not able to deacetylate acetylated polyamines. This is Histone deacetylase-like amidohydrolase from Pseudomonas aeruginosa (strain ATCC 15692 / DSM 22644 / CIP 104116 / JCM 14847 / LMG 12228 / 1C / PRS 101 / PAO1).